Consider the following 209-residue polypeptide: Nascent polypeptide-associated complex subunit alpha (209 aa).

A compositionally biased stretch (basic and acidic residues) spans 1–21 (MSNPRVEELPDEEPKKTTVQE). Disordered stretches follow at residues 1-51 (MSNP…HNRN) and 121-175 (QLAS…DKDI). A compositionally biased stretch (acidic residues) spans 22–36 (HEDDSSDDSEVEEVG). Residues 49-114 (NRNEKKARKA…AKIEDVNAAA (66 aa)) form the NAC-A/B domain. Residues 127-150 (AEDHSGHNHGEPSKAVEADEKKED) are compositionally biased toward basic and acidic residues. Positions 151 to 166 (KEDDEDEEEEEEEEVD) are enriched in acidic residues. In terms of domain architecture, UBA spans 170–209 (LEDKDIELVMTQANVSRNKAVKALKENDNDIVNSIMALSI).

This sequence belongs to the NAC-alpha family. Part of the nascent polypeptide-associated complex (NAC), consisting of EGD2 and EGD1. NAC associates with ribosomes via EGD1.

It localises to the cytoplasm. It is found in the nucleus. Its function is as follows. Component of the nascent polypeptide-associated complex (NAC), a dynamic component of the ribosomal exit tunnel, protecting the emerging polypeptides from interaction with other cytoplasmic proteins to ensure appropriate nascent protein targeting. The NAC complex also promotes mitochondrial protein import by enhancing productive ribosome interactions with the outer mitochondrial membrane and blocks the inappropriate interaction of ribosomes translating non-secretory nascent polypeptides with translocation sites in the membrane of the endoplasmic reticulum. EGD2 may also be involved in transcription regulation. This chain is Nascent polypeptide-associated complex subunit alpha (EGD2), found in Gibberella zeae (strain ATCC MYA-4620 / CBS 123657 / FGSC 9075 / NRRL 31084 / PH-1) (Wheat head blight fungus).